The primary structure comprises 396 residues: MAKGKFERTKPHVNVGTIGHVDHGKTTLTAAIATVLAKKFGGEAKGYDQIDNAPEEKARGITINTSHVEYETATRHYAHVDCPGHADYVKNMITGAAQMDGAILVCSAADGPMPQTREHILLARQVGVPYIIVFLNKCDMVDDEELLELVEMEVRELLDKYDFPGDDTPIIRGSAKLALEGDQSDKGEPAILRLAEALDTYIPTPERAVDGAFLMPVEDVFSISGRGTVVTGRVERGIIKVGEEIEIVGIRDTQKTTVTGVEMFRKLLDQGQAGDNVGLLLRGTKREDVERGQVLCKPGSIKPHTHFTAEVYVLSKDEGGRHTPFFNNYRPQFYFRTTDVTGSIELPADKEMVMPGDNVSITVKLINPIAMEEGLRFAIREGGRTVGAGVVAKIIA.

The region spanning 10–206 (KPHVNVGTIG…ALDTYIPTPE (197 aa)) is the tr-type G domain. The tract at residues 19–26 (GHVDHGKT) is G1. Position 19-26 (19-26 (GHVDHGKT)) interacts with GTP. Threonine 26 is a binding site for Mg(2+). Residues 60–64 (GITIN) form a G2 region. The tract at residues 81–84 (DCPG) is G3. Residues 81-85 (DCPGH) and 136-139 (NKCD) contribute to the GTP site. The segment at 136-139 (NKCD) is G4. The segment at 174 to 176 (SAK) is G5.

This sequence belongs to the TRAFAC class translation factor GTPase superfamily. Classic translation factor GTPase family. EF-Tu/EF-1A subfamily. In terms of assembly, monomer.

It localises to the cytoplasm. It carries out the reaction GTP + H2O = GDP + phosphate + H(+). GTP hydrolase that promotes the GTP-dependent binding of aminoacyl-tRNA to the A-site of ribosomes during protein biosynthesis. In Acidovorax sp. (strain JS42), this protein is Elongation factor Tu 1.